Consider the following 238-residue polypeptide: Succinate dehydrogenase iron-sulfur subunit (238 aa).

Residues Tyr8–Leu97 enclose the 2Fe-2S ferredoxin-type domain. [2Fe-2S] cluster contacts are provided by Cys55, Cys60, and Cys75. One can recognise a 4Fe-4S ferredoxin-type domain in the interval Gln139–Phe169. [4Fe-4S] cluster contacts are provided by Cys149, Cys152, and Cys155. Cys159 contacts [3Fe-4S] cluster. Trp164 provides a ligand contact to a ubiquinone. Residues Cys206 and Cys212 each coordinate [3Fe-4S] cluster. Residue Cys216 participates in [4Fe-4S] cluster binding.

It belongs to the succinate dehydrogenase/fumarate reductase iron-sulfur protein family. As to quaternary structure, part of an enzyme complex containing four subunits: a flavoprotein, an iron-sulfur, cytochrome b-556, and a hydrophobic anchor protein. The complex forms trimers. It depends on [2Fe-2S] cluster as a cofactor. [3Fe-4S] cluster is required as a cofactor. [4Fe-4S] cluster serves as cofactor.

The protein resides in the cell inner membrane. The enzyme catalyses a quinone + succinate = fumarate + a quinol. It participates in carbohydrate metabolism; tricarboxylic acid cycle; fumarate from succinate (bacterial route): step 1/1. Two distinct, membrane-bound, FAD-containing enzymes are responsible for the catalysis of fumarate and succinate interconversion; the fumarate reductase is used in anaerobic growth, and the succinate dehydrogenase is used in aerobic growth. The chain is Succinate dehydrogenase iron-sulfur subunit (sdhB) from Escherichia coli (strain K12).